A 408-amino-acid chain; its full sequence is MAKDKIVLAYSGGLDTSIILKWLQTERNYDVVCFTADLGQGDEVEEARVKALNTGAVAAYALDLREEFVRDYVFPMFRSSALYEGYYLLGTSIARPLIAKKMVEIAQKEGAVAVSHGATGKGNDQVRFEMTAYALQPDIVTVAPWRDWEFQGRADLEAFAHEHGIPVPTTKKDPWSTDANMLHISYEGGILEDPWAEPPAHMFKLTVAPEEAPDEAEYVEIEFLNGDAVAINGETLSPAALLDRANEIGGRHGVGRVDLVENRFVGMKSRGVYETPGGTLLYHARRAVESLTLDREVLHQRDALGPKYAELVYNGFWFAPEREALQVYMDHVAKAVTGTARLKLYKGNCIVAGRKAERSLYDKDLVSFEAGGDYNQHDAGAFIKLNALRMRVQARVEAKAGQKDKAGD.

Residues 9–17 (AYSGGLDTS) and Ala36 contribute to the ATP site. Residues Tyr87 and Ser92 each coordinate L-citrulline. Gly117 contributes to the ATP binding site. L-aspartate is bound by residues Thr119, Asn123, and Asp124. Asn123 serves as a coordination point for L-citrulline. L-citrulline-binding residues include Arg127, Ser176, Ser185, Glu261, and Tyr273.

This sequence belongs to the argininosuccinate synthase family. Type 1 subfamily. Homotetramer.

The protein localises to the cytoplasm. It carries out the reaction L-citrulline + L-aspartate + ATP = 2-(N(omega)-L-arginino)succinate + AMP + diphosphate + H(+). Its pathway is amino-acid biosynthesis; L-arginine biosynthesis; L-arginine from L-ornithine and carbamoyl phosphate: step 2/3. The sequence is that of Argininosuccinate synthase from Deinococcus deserti (strain DSM 17065 / CIP 109153 / LMG 22923 / VCD115).